The following is a 24-amino-acid chain: Homotarsinin (24 aa).

Arginine 24 carries the post-translational modification Arginine amide.

As to quaternary structure, homodimer; disulfide-linked. Expressed by the skin glands.

Its subcellular location is the secreted. Antimicrobial peptide. Active against Gram-negative bacteria E.coli ATCC 25922 (MIC=1.5 uM) and P.aeruginosa ATTC 27853 (MIC=23.2 uM) and against Gram-positive bacterium S.aureus ATCC 29313 (MIC=11.6 uM). Has no hemolytic activity. Associates with and disrupts membranes in vitro. The polypeptide is Homotarsinin (Phyllomedusa tarsius (Brownbelly leaf frog)).